We begin with the raw amino-acid sequence, 1127 residues long: Disease resistance protein RPS6 (1127 aa).

N-acetylmethionine is present on Met-1. Residues Trp-12 to Met-176 enclose the TIR domain. The active site involves Glu-87. LRR repeat units lie at residues Met-197–Lys-221, Ile-540–Lys-563, Pro-587–Pro-609, Glu-610–Leu-632, Ala-633–Thr-656, Leu-658–Leu-679, Asn-680–Ser-704, Ser-766–Leu-790, Tyr-791–Leu-813, Asp-814–Ser-834, and Thr-835–Leu-857.

Interacts with EDS1. As to expression, ubiquitous.

It catalyses the reaction NAD(+) + H2O = ADP-D-ribose + nicotinamide + H(+). In terms of biological role, disease resistance (R) protein that specifically recognizes the hopA1 type III effector avirulence protein from Pseudomonas syringae. Resistance proteins guard the plant against pathogens that contain an appropriate avirulence protein via an indirect interaction with this avirulence protein. That triggers a defense system including the hypersensitive response, which restricts the pathogen growth. In Arabidopsis thaliana (Mouse-ear cress), this protein is Disease resistance protein RPS6.